The following is a 170-amino-acid chain: Large ribosomal subunit protein uL22c (170 aa).

This sequence belongs to the universal ribosomal protein uL22 family. As to quaternary structure, part of the 50S ribosomal subunit.

Its subcellular location is the plastid. It is found in the chloroplast. This protein binds specifically to 23S rRNA. In terms of biological role, the globular domain of the protein is located near the polypeptide exit tunnel on the outside of the subunit, while an extended beta-hairpin is found that lines the wall of the exit tunnel in the center of the 70S ribosome. In Nandina domestica (Heavenly bamboo), this protein is Large ribosomal subunit protein uL22c (rpl22).